The primary structure comprises 101 residues: Putative pterin-4-alpha-carbinolamine dehydratase (101 aa).

It belongs to the pterin-4-alpha-carbinolamine dehydratase family.

The enzyme catalyses (4aS,6R)-4a-hydroxy-L-erythro-5,6,7,8-tetrahydrobiopterin = (6R)-L-erythro-6,7-dihydrobiopterin + H2O. The protein is Putative pterin-4-alpha-carbinolamine dehydratase of Rhizobium leguminosarum bv. trifolii (strain WSM2304).